The primary structure comprises 657 residues: Receptor-type tyrosine-protein phosphatase R (657 aa).

Residues 1-21 (MRRAVCFPALCLLLNLHAAGC) form the signal peptide. The Extracellular segment spans residues 22 to 227 (FSGNNDHFLA…EADKIWSKEG (206 aa)). Ser-23 is a glycosylation site (O-linked (Xyl...) (chondroitin sulfate) serine). The N-linked (GlcNAc...) asparagine glycan is linked to Asn-129. Residues 228–248 (FYAVVIFLSIFVIIVTCLMIL) form a helical membrane-spanning segment. Residues 249–657 (YRLKERFQLS…ESRLSAETVQ (409 aa)) are Cytoplasmic-facing. Phosphoserine is present on Ser-272. Ser-339 bears the Phosphoserine; by PKA mark. The region spanning 393-647 (LQSEFMEIPM…EFVHHALCLY (255 aa)) is the Tyrosine-protein phosphatase domain. Substrate contacts are provided by residues Asp-554, 588 to 594 (CSAGIGR), and Gln-632. Cys-588 acts as the Phosphocysteine intermediate in catalysis.

This sequence belongs to the protein-tyrosine phosphatase family. Receptor class 7 subfamily. As to quaternary structure, interacts with MAPKs. As to expression, detected in cerebrospinal fluid (at protein level). Expressed in brain, placenta, small intestine, stomach, uterus and weakly in the prostate. Isoform alpha has been observed only in the brain. Isoform gamma is expressed in brain, placenta and uterus. Isoform delta is expressed in brain, kidney, placenta, prostate, small intestine and uterus.

It is found in the secreted. Its subcellular location is the cell membrane. The protein resides in the cytoplasm. It localises to the perinuclear region. The catalysed reaction is O-phospho-L-tyrosyl-[protein] + H2O = L-tyrosyl-[protein] + phosphate. Sequesters mitogen-activated protein kinases (MAPKs) such as MAPK1, MAPK3 and MAPK14 in the cytoplasm in an inactive form. The MAPKs bind to a dephosphorylated kinase interacting motif, phosphorylation of which by the protein kinase A complex releases the MAPKs for activation and translocation into the nucleus. In Homo sapiens (Human), this protein is Receptor-type tyrosine-protein phosphatase R (PTPRR).